A 198-amino-acid chain; its full sequence is Recombination protein RecR (198 aa).

A C4-type zinc finger spans residues 57-72 (CSICGNLTDDDPCHIC). The Toprim domain maps to 80–175 (TTILVVEDAK…KVTRLARGLA (96 aa)).

This sequence belongs to the RecR family.

Functionally, may play a role in DNA repair. It seems to be involved in an RecBC-independent recombinational process of DNA repair. It may act with RecF and RecO. The protein is Recombination protein RecR of Streptococcus pyogenes serotype M5 (strain Manfredo).